The sequence spans 499 residues: MAEEHGGLDWLRGRSVLVAGAGVSGRATIEPLRDLGALVTVTDANVDALAECARLGAATVPIDDLLAERDRVAEFALVVTSPGFRPDAPLLSLAAGDGVPIWGDIEFSWHVDRAGLYGPPRRWLVVTGTNGKTTTTSMLQSILEAAELPSLACGNIGIPVLDALRQTEPRAEALAVELSSFQLHWAPSVRPTAGAILNIAEDHLDWHGGMQPYIDAKARALTGEVAVLGLDDEVASSLFSSSPAVRTVGFRLGVPAPGELGVEDGYLVDRAFADGERLAPAEGITPPGPAGLMDALAAAALARAIGVPPDAVAAGLAAHVVGPHRAALVAEVGGVTFVDDSKATNPHAARPSILAHERVVWIAGGLLKGARVDDLVREVASRLAGAVLLGRDAMQIAESLARHAPEVPVVTVETGDDAGVSAVPQTATHRVVLPADTDSDAVMGVVVREAAALATAGDSVVLAPAAASLDMFASYGHRGDSFTDAVGRLDASDISRTLR.

Gly-128–Thr-134 serves as a coordination point for ATP.

It belongs to the MurCDEF family.

It is found in the cytoplasm. It carries out the reaction UDP-N-acetyl-alpha-D-muramoyl-L-alanine + D-glutamate + ATP = UDP-N-acetyl-alpha-D-muramoyl-L-alanyl-D-glutamate + ADP + phosphate + H(+). Its pathway is cell wall biogenesis; peptidoglycan biosynthesis. Cell wall formation. Catalyzes the addition of glutamate to the nucleotide precursor UDP-N-acetylmuramoyl-L-alanine (UMA). The sequence is that of UDP-N-acetylmuramoylalanine--D-glutamate ligase from Rhodococcus jostii (strain RHA1).